The primary structure comprises 454 residues: Enolase (454 aa).

Glutamine 167 provides a ligand contact to (2R)-2-phosphoglycerate. Catalysis depends on glutamate 209, which acts as the Proton donor. Mg(2+)-binding residues include aspartate 250, glutamate 312, and aspartate 339. Positions 364, 393, 394, and 415 each coordinate (2R)-2-phosphoglycerate. Lysine 364 (proton acceptor) is an active-site residue.

Belongs to the enolase family. It depends on Mg(2+) as a cofactor.

It localises to the cytoplasm. It is found in the secreted. Its subcellular location is the cell surface. It catalyses the reaction (2R)-2-phosphoglycerate = phosphoenolpyruvate + H2O. Its pathway is carbohydrate degradation; glycolysis; pyruvate from D-glyceraldehyde 3-phosphate: step 4/5. Catalyzes the reversible conversion of 2-phosphoglycerate (2-PG) into phosphoenolpyruvate (PEP). It is essential for the degradation of carbohydrates via glycolysis. The sequence is that of Enolase from Mycoplasmopsis agalactiae (strain NCTC 10123 / CIP 59.7 / PG2) (Mycoplasma agalactiae).